The primary structure comprises 183 residues: MTKQPEDWLDDVPGDDIEDEDDEIIWVSKSEIKRDAEELKRLGAEIVDLGKNALDKIPLDADLRAAIELAQRIKMEGRRRQLQLIGKMLRQRDVEPIRQALDKLKNRHNQQVVLFHKLENLRDRLIDQGDDAIAEVLNLWPDADRQQLRTRIRNAKKEKEGNKPPKSARQIFQYLRELAENEG.

Belongs to the DarP family.

The protein resides in the cytoplasm. Member of a network of 50S ribosomal subunit biogenesis factors which assembles along the 30S-50S interface, preventing incorrect 23S rRNA structures from forming. Promotes peptidyl transferase center (PTC) maturation. This chain is Dual-action ribosomal maturation protein DarP, found in Escherichia coli O7:K1 (strain IAI39 / ExPEC).